The chain runs to 227 residues: NADH-quinone oxidoreductase subunit C (227 aa).

Belongs to the complex I 30 kDa subunit family. As to quaternary structure, NDH-1 is composed of 14 different subunits. Subunits NuoB, C, D, E, F, and G constitute the peripheral sector of the complex.

It is found in the cell inner membrane. The enzyme catalyses a quinone + NADH + 5 H(+)(in) = a quinol + NAD(+) + 4 H(+)(out). Functionally, NDH-1 shuttles electrons from NADH, via FMN and iron-sulfur (Fe-S) centers, to quinones in the respiratory chain. The immediate electron acceptor for the enzyme in this species is believed to be ubiquinone. Couples the redox reaction to proton translocation (for every two electrons transferred, four hydrogen ions are translocated across the cytoplasmic membrane), and thus conserves the redox energy in a proton gradient. This chain is NADH-quinone oxidoreductase subunit C, found in Legionella pneumophila (strain Corby).